The sequence spans 354 residues: Protein RecA (354 aa).

68–75 (GPESSGKT) is an ATP binding site.

This sequence belongs to the RecA family.

The protein localises to the cytoplasm. Functionally, can catalyze the hydrolysis of ATP in the presence of single-stranded DNA, the ATP-dependent uptake of single-stranded DNA by duplex DNA, and the ATP-dependent hybridization of homologous single-stranded DNAs. It interacts with LexA causing its activation and leading to its autocatalytic cleavage. This Synechocystis sp. (strain ATCC 27184 / PCC 6803 / Kazusa) protein is Protein RecA.